Here is a 199-residue protein sequence, read N- to C-terminus: Recombination protein RecR (199 aa).

The C4-type zinc-finger motif lies at 58-73 (CLNCGNIGTSDICDIC). Residues 81–176 (GEICVVEDVA…AVTSLAQGVP (96 aa)) form the Toprim domain.

Belongs to the RecR family.

Its function is as follows. May play a role in DNA repair. It seems to be involved in an RecBC-independent recombinational process of DNA repair. It may act with RecF and RecO. This Dinoroseobacter shibae (strain DSM 16493 / NCIMB 14021 / DFL 12) protein is Recombination protein RecR.